A 165-amino-acid polypeptide reads, in one-letter code: Lipoprotein signal peptidase (165 aa).

A run of 2 helical transmembrane segments spans residues 66–86 (WQFWLFLVATVLAVWAILSLT) and 91–111 (NEPVLYTAFGLIMGGALGNLV). Catalysis depends on residues Asp-121 and Asp-139. The helical transmembrane segment at 132–152 (WPAFNVADIAICIGAFLAFVA) threads the bilayer.

Belongs to the peptidase A8 family.

It is found in the cell inner membrane. It carries out the reaction Release of signal peptides from bacterial membrane prolipoproteins. Hydrolyzes -Xaa-Yaa-Zaa-|-(S,diacylglyceryl)Cys-, in which Xaa is hydrophobic (preferably Leu), and Yaa (Ala or Ser) and Zaa (Gly or Ala) have small, neutral side chains.. The protein operates within protein modification; lipoprotein biosynthesis (signal peptide cleavage). In terms of biological role, this protein specifically catalyzes the removal of signal peptides from prolipoproteins. This Nitratidesulfovibrio vulgaris (strain DP4) (Desulfovibrio vulgaris) protein is Lipoprotein signal peptidase.